Here is a 904-residue protein sequence, read N- to C-terminus: Eukaryotic translation initiation factor 3 subunit C (904 aa).

Disordered stretches follow at residues M1–D38 and F156–K290. Over residues I22 to F32 the composition is skewed to polar residues. Acidic residues predominate over residues D161–A183. Residues F194–K206 show a composition bias toward basic and acidic residues. The span at D207–A232 shows a compositional bias: acidic residues. Over residues I237–K247 the composition is skewed to basic and acidic residues. A compositionally biased stretch (basic residues) spans K257–K272. The 177-residue stretch at F636–P812 folds into the PCI domain. A disordered region spans residues R847–E904. Residues Y860 to N873 are compositionally biased toward low complexity. The span at R874–E904 shows a compositional bias: basic and acidic residues.

Belongs to the eIF-3 subunit C family. In terms of assembly, component of the eukaryotic translation initiation factor 3 (eIF-3) complex.

It localises to the cytoplasm. In terms of biological role, component of the eukaryotic translation initiation factor 3 (eIF-3) complex, which is involved in protein synthesis of a specialized repertoire of mRNAs and, together with other initiation factors, stimulates binding of mRNA and methionyl-tRNAi to the 40S ribosome. The eIF-3 complex specifically targets and initiates translation of a subset of mRNAs involved in cell proliferation. In Culex quinquefasciatus (Southern house mosquito), this protein is Eukaryotic translation initiation factor 3 subunit C.